The chain runs to 703 residues: DnaJ homolog subfamily C member 14 (703 aa).

The span at 1–11 (MAQKHPGERRL) shows a compositional bias: basic and acidic residues. Residues 1–229 (MAQKHPGERR…GRHRLARKRS (229 aa)) are disordered. Low complexity predominate over residues 17 to 28 (SGGTSLSTSGSS). Over residues 75 to 84 (HGPPRGPGPP) the composition is skewed to pro residues. Acidic residues predominate over residues 91 to 102 (DESETGSEESGV). The segment covering 121–133 (SFLSIPSACNCQG) has biased composition (polar residues). Acidic residues predominate over residues 163 to 176 (GEDEELEEEYDDEE). The segment covering 193–202 (PLSRRQKHRF) has biased composition (basic residues). The span at 203 to 218 (LIKEDVRDSGRREPKA) shows a compositional bias: basic and acidic residues. The segment covering 219-228 (PGRHRLARKR) has biased composition (basic residues). Helical transmembrane passes span 305 to 325 (MMFQ…IRIL) and 327 to 347 (VVGA…QLGW). Residues 444–508 (NPFHVLGVEA…ERRKEYEMKR (65 aa)) enclose the J domain. Disordered regions lie at residues 622–643 (FGSR…PPAD) and 659–703 (MSNG…PFQR). The segment covering 673 to 684 (GTTSTSRPNSSV) has biased composition (polar residues). Positions 691 to 703 (PKRRKKVRRPFQR) are enriched in basic residues.

As to quaternary structure, interacts with the FxxxFxxxF motif of DRD1 via its C-terminal domain.

The protein resides in the endoplasmic reticulum membrane. In terms of biological role, regulates the export of target proteins, such as DRD1, from the endoplasmic reticulum to the cell surface. The sequence is that of DnaJ homolog subfamily C member 14 (Dnajc14) from Mus musculus (Mouse).